The following is a 97-amino-acid chain: Putative membrane protein insertion efficiency factor (97 aa).

The protein belongs to the UPF0161 family.

The protein localises to the cell membrane. Its function is as follows. Could be involved in insertion of integral membrane proteins into the membrane. The chain is Putative membrane protein insertion efficiency factor from Lactobacillus gasseri (strain ATCC 33323 / DSM 20243 / BCRC 14619 / CIP 102991 / JCM 1131 / KCTC 3163 / NCIMB 11718 / NCTC 13722 / AM63).